The primary structure comprises 205 residues: MSYSCEYTPLNMALVPMVVERTLRGERSYDIFSRLLKERIIFMTGKVEDYMANIIVAQMIFLEAENPEKDIYLYINSPGGNITSGMSIYDTMQFIKPNVSTFCMGQAASMGAFLLAAGTKGKRFCLPNARMMIHQPMGGFQGQATDIQIHAKEILKVKNRMNELMAKHIGKTLQVIEQDTERDRFLSANEAVDYGLVDAILSHRI.

The Nucleophile role is filled by serine 109. Histidine 134 is a catalytic residue.

The protein belongs to the peptidase S14 family. Fourteen ClpP subunits assemble into 2 heptameric rings which stack back to back to give a disk-like structure with a central cavity, resembling the structure of eukaryotic proteasomes.

It localises to the cytoplasm. The catalysed reaction is Hydrolysis of proteins to small peptides in the presence of ATP and magnesium. alpha-casein is the usual test substrate. In the absence of ATP, only oligopeptides shorter than five residues are hydrolyzed (such as succinyl-Leu-Tyr-|-NHMec, and Leu-Tyr-Leu-|-Tyr-Trp, in which cleavage of the -Tyr-|-Leu- and -Tyr-|-Trp bonds also occurs).. Functionally, cleaves peptides in various proteins in a process that requires ATP hydrolysis. Has a chymotrypsin-like activity. Plays a major role in the degradation of misfolded proteins. The chain is ATP-dependent Clp protease proteolytic subunit from Baumannia cicadellinicola subsp. Homalodisca coagulata.